Here is a 191-residue protein sequence, read N- to C-terminus: Ribosomal RNA small subunit methyltransferase G (191 aa).

S-adenosyl-L-methionine contacts are provided by residues Gly62, Phe67, 111-112 (IE), and Arg124.

Belongs to the methyltransferase superfamily. RNA methyltransferase RsmG family.

The protein localises to the cytoplasm. The catalysed reaction is guanosine(527) in 16S rRNA + S-adenosyl-L-methionine = N(7)-methylguanosine(527) in 16S rRNA + S-adenosyl-L-homocysteine. In terms of biological role, specifically methylates the N7 position of guanine in position 527 of 16S rRNA. In Rickettsia prowazekii (strain Madrid E), this protein is Ribosomal RNA small subunit methyltransferase G.